The sequence spans 33 residues: Potassium channel toxin alpha-KTx 10.4 (33 aa).

3 disulfides stabilise this stretch: cysteine 3–cysteine 22, cysteine 8–cysteine 27, and cysteine 12–cysteine 29.

It belongs to the short scorpion toxin superfamily. Potassium channel inhibitor family. Alpha-KTx 10 subfamily. In terms of tissue distribution, expressed by the venom gland.

It localises to the secreted. Functionally, blocks human voltage-gated potassium channel Kv1.2/KCNA2 (IC(50)=3.6 nM) and Kv1.3/KCNA3 (IC(50)=72 nM). The sequence is that of Potassium channel toxin alpha-KTx 10.4 from Centruroides tecomanus (Scorpion).